Consider the following 116-residue polypeptide: Venom protein 54.1 (116 aa).

The first 19 residues, 1-19 (MNFQVFSLIFFNFVYYCSC), serve as a signal peptide directing secretion.

Post-translationally, contains 3 disulfide bonds. In terms of tissue distribution, expressed by the venom gland.

The protein localises to the secreted. This is Venom protein 54.1 from Lychas mucronatus (Chinese swimming scorpion).